We begin with the raw amino-acid sequence, 227 residues long: ATP-dependent dethiobiotin synthetase BioD (227 aa).

Residue 13 to 18 participates in ATP binding; the sequence is DVGKTV. T17 is a binding site for Mg(2+). The active site involves K38. ATP is bound by residues D55, 116 to 119, 176 to 177, and 205 to 207; these read EGAG, NR, and PYI. Positions 55 and 116 each coordinate Mg(2+).

The protein belongs to the dethiobiotin synthetase family. Homodimer. It depends on Mg(2+) as a cofactor.

It is found in the cytoplasm. The enzyme catalyses (7R,8S)-7,8-diammoniononanoate + CO2 + ATP = (4R,5S)-dethiobiotin + ADP + phosphate + 3 H(+). The protein operates within cofactor biosynthesis; biotin biosynthesis; biotin from 7,8-diaminononanoate: step 1/2. Catalyzes a mechanistically unusual reaction, the ATP-dependent insertion of CO2 between the N7 and N8 nitrogen atoms of 7,8-diaminopelargonic acid (DAPA, also called 7,8-diammoniononanoate) to form a ureido ring. This chain is ATP-dependent dethiobiotin synthetase BioD, found in Vibrio campbellii (strain ATCC BAA-1116).